A 523-amino-acid polypeptide reads, in one-letter code: Galactarate dehydratase (L-threo-forming) (523 aa).

It belongs to the UxaA family. As to quaternary structure, homodimer. Requires Fe(2+) as cofactor.

It catalyses the reaction galactarate = 5-dehydro-4-deoxy-D-glucarate + H2O. Its pathway is carbohydrate acid metabolism; galactarate degradation; D-glycerate from galactarate: step 1/3. Catalyzes the dehydration of galactarate to form 5-dehydro-4-deoxy-D-glucarate (5-KDG). The polypeptide is Galactarate dehydratase (L-threo-forming) (Escherichia coli (strain K12)).